We begin with the raw amino-acid sequence, 473 residues long: UTP--glucose-1-phosphate uridylyltransferase (473 aa).

Residues 89 to 92 (LNGG), Lys103, Gln166, and Gly195 contribute to the UTP site. 91–92 (GG) is a binding site for substrate. Substrate-binding positions include His196 and 224–226 (NSD). UTP contacts are provided by Asp226 and Lys364.

The protein belongs to the UDPGP type 1 family.

The protein resides in the cytoplasm. It catalyses the reaction alpha-D-glucose 1-phosphate + UTP + H(+) = UDP-alpha-D-glucose + diphosphate. Functionally, plays a central role as a glucosyl donor in cellular metabolic pathways. The protein is UTP--glucose-1-phosphate uridylyltransferase of Hordeum vulgare (Barley).